A 192-amino-acid polypeptide reads, in one-letter code: uncharacterized protein (192 aa).

2 helical membrane-spanning segments follow: residues 31-51 and 119-139; these read IVET…YVYE and VPGA…LWEI.

The protein localises to the cell membrane. This is an uncharacterized protein from Thermotoga maritima (strain ATCC 43589 / DSM 3109 / JCM 10099 / NBRC 100826 / MSB8).